Reading from the N-terminus, the 59-residue chain is Large ribosomal subunit protein bL32 (59 aa).

The segment covering 1–15 (MANPKRKQSKRRSAN) has biased composition (basic residues). The interval 1-48 (MANPKRKQSKRRSANRRAANAFIAPEFAKDPTDGSAFRPHRVNPKNGM) is disordered.

The protein belongs to the bacterial ribosomal protein bL32 family.

The polypeptide is Large ribosomal subunit protein bL32 (Opitutus terrae (strain DSM 11246 / JCM 15787 / PB90-1)).